The following is a 148-amino-acid chain: Isotocin-neurophysin IT 2 (148 aa).

Positions 1 to 20 (MSGSMSSVFSLLYLLSVCSA) are cleaved as a signal peptide. A disulfide bridge links Cys21 with Cys26. A Glycine amide modification is found at Gly29. 7 disulfide bridges follow: Cys42/Cys86, Cys45/Cys59, Cys53/Cys76, Cys60/Cys66, Cys93/Cys105, Cys99/Cys117, and Cys106/Cys111.

This sequence belongs to the vasopressin/oxytocin family.

Functionally, isotocin causes contraction of smooth muscles. This chain is Isotocin-neurophysin IT 2, found in Catostomus commersonii (White sucker).